We begin with the raw amino-acid sequence, 812 residues long: Chromosome alignment-maintaining phosphoprotein 1 (812 aa).

Position 1 is an N-acetylmethionine (methionine 1). Basic and acidic residues predominate over residues alanine 86–proline 105. Disordered regions lie at residues alanine 86 to proline 124 and lysine 136 to arginine 546. Serine 87, serine 108, serine 173, serine 184, serine 204, serine 214, and serine 217 each carry phosphoserine. The span at valine 202–valine 213 shows a compositional bias: pro residues. Polar residues predominate over residues alanine 220 to phenylalanine 233. 15 positions are modified to phosphoserine: serine 244, serine 247, serine 253, serine 264, serine 275, serine 282, serine 286, serine 297, serine 308, serine 319, serine 344, serine 355, serine 376, serine 382, and serine 386. Positions alanine 271 to lysine 490 are mediates interaction with MAD2L2. A compositionally biased stretch (pro residues) spans serine 284–serine 297. Residues proline 336–proline 361 are compositionally biased toward pro residues. A compositionally biased stretch (low complexity) spans proline 363 to serine 392. Threonine 403 carries the phosphothreonine modification. Phosphoserine is present on residues serine 405, serine 416, serine 427, serine 432, serine 436, serine 443, serine 445, and serine 452. The tract at residues leucine 451–glutamine 590 is mediates localization to the spindle and the kinetochore and is required for the attachment of spindle microtubules to the kinetochore. Threonine 458 is modified (phosphothreonine). Serine 459, serine 462, serine 472, and serine 476 each carry phosphoserine. Position 490 is an N6-acetyllysine; alternate (lysine 490). Lysine 490 participates in a covalent cross-link: Glycyl lysine isopeptide (Lys-Gly) (interchain with G-Cter in SUMO2); alternate. The segment covering proline 499–serine 512 has biased composition (low complexity). Phosphoserine is present on residues serine 507, serine 512, and serine 542. Lysine 565 participates in a covalent cross-link: Glycyl lysine isopeptide (Lys-Gly) (interchain with G-Cter in SUMO2). Phosphoserine occurs at positions 572 and 603. The segment at lysine 591–isoleucine 812 is mediates localization to the chromosome and the spindle and negatively regulates chromosome alignment. Residue lysine 606 forms a Glycyl lysine isopeptide (Lys-Gly) (interchain with G-Cter in SUMO2) linkage. Phosphoserine occurs at positions 615, 626, 627, and 632. Lysine 638 is covalently cross-linked (Glycyl lysine isopeptide (Lys-Gly) (interchain with G-Cter in SUMO2)). A phosphoserine mark is found at serine 651, serine 652, and serine 653. A Glycyl lysine isopeptide (Lys-Gly) (interchain with G-Cter in SUMO2) cross-link involves residue lysine 670. A Phosphoserine modification is found at serine 675. Lysine 689 participates in a covalent cross-link: Glycyl lysine isopeptide (Lys-Gly) (interchain with G-Cter in SUMO2). Serine 736 carries the phosphoserine modification. Residues tyrosine 738–histidine 760 form a C2H2-type zinc finger.

Interacts with MAD2L2. Interacts with POGZ, CBX1, CBX3 and CBX5. Post-translationally, phosphorylated by CDK1. Mitotic phosphorylation is required for the attachment of spindle microtubules to the kinetochore.

Its subcellular location is the nucleus. It is found in the chromosome. The protein resides in the centromere. The protein localises to the kinetochore. It localises to the cytoplasm. Its subcellular location is the cytoskeleton. It is found in the spindle. Its function is as follows. Required for proper alignment of chromosomes at metaphase and their accurate segregation during mitosis. Involved in the maintenance of spindle microtubules attachment to the kinetochore during sister chromatid biorientation. May recruit CENPE and CENPF to the kinetochore. The sequence is that of Chromosome alignment-maintaining phosphoprotein 1 (CHAMP1) from Homo sapiens (Human).